The following is a 428-amino-acid chain: Divalent metal cation transporter MntH (428 aa).

11 helical membrane passes run 33 to 53 (WYLLGPAFVAAIAYVDPGNVA), 60 to 80 (AQFGYLLLWVIVAANVMAALV), 114 to 134 (QAEIVAMATDVAEVIGGAIAL), 136 to 156 (IMFNLPLPIGGIITGVVSLLL), 171 to 191 (VITALLLVIAIGFTASFFVVT), 210 to 230 (SVLLAAAIMGATVMPHAVYLH), 258 to 278 (VGLAMLIAGGVNAAMLLVAAL), 299 to 319 (TLGATIAVLFAVGLLASGLAS), 334 to 356 (LLHWSVPMLVRRLITLGPALAIL), 365 to 385 (TLVLSQVVLSFGIPFAVLPLV), and 406 to 426 (VGWVVAVMVSLLNVMLIYLTV).

The protein belongs to the NRAMP family.

The protein resides in the cell membrane. In terms of biological role, h(+)-stimulated, divalent metal cation uptake system. Transports zinc and iron. Can also interact with manganese and copper. This Mycobacterium tuberculosis (strain CDC 1551 / Oshkosh) protein is Divalent metal cation transporter MntH.